The following is a 155-amino-acid chain: Putative pre-16S rRNA nuclease (155 aa).

This sequence belongs to the YqgF nuclease family.

The protein resides in the cytoplasm. Could be a nuclease involved in processing of the 5'-end of pre-16S rRNA. This is Putative pre-16S rRNA nuclease from Wolbachia pipientis wMel.